The following is a 641-amino-acid chain: Serine/threonine-protein kinase pink-1, mitochondrial (641 aa).

Residues 1–74 (MSMKRFGKAA…TRHGRVFRPF (74 aa)) constitute a mitochondrion transit peptide. Residues 137-483 (YEFGEFLGQG…AANALNLSLF (347 aa)) form the Protein kinase domain. Residues 143-151 (LGQGCNAAV) and lysine 199 each bind ATP. The active-site Proton acceptor is the aspartate 338.

This sequence belongs to the protein kinase superfamily. Ser/Thr protein kinase family. Mg(2+) is required as a cofactor. In terms of processing, autophosphorylated.

It is found in the mitochondrion. It carries out the reaction L-seryl-[protein] + ATP = O-phospho-L-seryl-[protein] + ADP + H(+). The enzyme catalyses L-threonyl-[protein] + ATP = O-phospho-L-threonyl-[protein] + ADP + H(+). Protects against mitochondrial dysfunction during cellular stress, potentially by phosphorylating mitochondrial proteins. Plays a role in mitophagy. The sequence is that of Serine/threonine-protein kinase pink-1, mitochondrial (pink-1) from Caenorhabditis elegans.